Here is a 205-residue protein sequence, read N- to C-terminus: Small ribosomal subunit protein uS4 (205 aa).

A disordered region spans residues 14-49 (RMGENIWGRPKSPVNRREYGPGQHGQRRKGKMSDFG). Residues 94–157 (SRLDAIVYRA…KQLVTVLEAV (64 aa)) form the S4 RNA-binding domain.

It belongs to the universal ribosomal protein uS4 family. Part of the 30S ribosomal subunit. Contacts protein S5. The interaction surface between S4 and S5 is involved in control of translational fidelity.

Its function is as follows. One of the primary rRNA binding proteins, it binds directly to 16S rRNA where it nucleates assembly of the body of the 30S subunit. With S5 and S12 plays an important role in translational accuracy. The polypeptide is Small ribosomal subunit protein uS4 (Agrobacterium fabrum (strain C58 / ATCC 33970) (Agrobacterium tumefaciens (strain C58))).